Here is a 138-residue protein sequence, read N- to C-terminus: Microneme antigen L2 (138 aa).

2 consecutive PAN domains span residues 9–78 (CFAH…PRSC) and 82–138 (CSDA…SKRA). 6 disulfides stabilise this stretch: C9-C78, C34-C56, C38-C44, C82-C86, C107-C127, and C111-C117. Residue S18 coordinates a carbohydrate. The a carbohydrate site is built by K59, Y66, and D71.

As to quaternary structure, homodimer or heterodimer. In terms of processing, contains six disulfide bonds.

It is found in the cytoplasmic vesicle. Its subcellular location is the secretory vesicle. The protein resides in the microneme. Functionally, galactose-binding lectin. Plays a role in adhesion to the host cell. Has a potential role in invasion of host cells. This chain is Microneme antigen L2, found in Sarcocystis muris.